Reading from the N-terminus, the 230-residue chain is Orotidine 5'-phosphate decarboxylase (230 aa).

Residues D11, K34, 61 to 70, T117, R179, Q188, G208, and R209 contribute to the substrate site; that span reads DLKLHDIPNT. The Proton donor role is filled by K63.

Belongs to the OMP decarboxylase family. Type 1 subfamily. Homodimer.

The enzyme catalyses orotidine 5'-phosphate + H(+) = UMP + CO2. Its pathway is pyrimidine metabolism; UMP biosynthesis via de novo pathway; UMP from orotate: step 2/2. Functionally, catalyzes the decarboxylation of orotidine 5'-monophosphate (OMP) to uridine 5'-monophosphate (UMP). In Streptococcus gordonii (strain Challis / ATCC 35105 / BCRC 15272 / CH1 / DL1 / V288), this protein is Orotidine 5'-phosphate decarboxylase.